The chain runs to 138 residues: Ribulose bisphosphate carboxylase small subunit (138 aa).

Belongs to the RuBisCO small chain family. In terms of assembly, heterohexadecamer of 8 large and 8 small subunits.

The protein resides in the plastid. The protein localises to the chloroplast. RuBisCO catalyzes two reactions: the carboxylation of D-ribulose 1,5-bisphosphate, the primary event in carbon dioxide fixation, as well as the oxidative fragmentation of the pentose substrate in the photorespiration process. Both reactions occur simultaneously and in competition at the same active site. Although the small subunit is not catalytic it is essential for maximal activity. The chain is Ribulose bisphosphate carboxylase small subunit from Porphyra purpurea (Red seaweed).